The sequence spans 189 residues: Translation initiation factor IF-3 (189 aa).

It belongs to the IF-3 family. As to quaternary structure, monomer.

The protein localises to the cytoplasm. Functionally, IF-3 binds to the 30S ribosomal subunit and shifts the equilibrium between 70S ribosomes and their 50S and 30S subunits in favor of the free subunits, thus enhancing the availability of 30S subunits on which protein synthesis initiation begins. This Corynebacterium glutamicum (strain R) protein is Translation initiation factor IF-3.